A 345-amino-acid polypeptide reads, in one-letter code: Biotin synthase (345 aa).

Positions 38–256 (RQVQVSTLLS…IAVARIMMPA (219 aa)) constitute a Radical SAM core domain. [4Fe-4S] cluster is bound by residues cysteine 53, cysteine 57, and cysteine 60. 4 residues coordinate [2Fe-2S] cluster: cysteine 97, cysteine 128, cysteine 188, and arginine 260.

Belongs to the radical SAM superfamily. Biotin synthase family. In terms of assembly, homodimer. Requires [4Fe-4S] cluster as cofactor. The cofactor is [2Fe-2S] cluster.

The enzyme catalyses (4R,5S)-dethiobiotin + (sulfur carrier)-SH + 2 reduced [2Fe-2S]-[ferredoxin] + 2 S-adenosyl-L-methionine = (sulfur carrier)-H + biotin + 2 5'-deoxyadenosine + 2 L-methionine + 2 oxidized [2Fe-2S]-[ferredoxin]. It participates in cofactor biosynthesis; biotin biosynthesis; biotin from 7,8-diaminononanoate: step 2/2. Functionally, catalyzes the conversion of dethiobiotin (DTB) to biotin by the insertion of a sulfur atom into dethiobiotin via a radical-based mechanism. The sequence is that of Biotin synthase from Serratia proteamaculans (strain 568).